The primary structure comprises 101 residues: Putative metal transport protein HQ_3622A (101 aa).

The first 32 residues, 1–32 (MKIISMSMDSWIQRAALMLLGLVIVAPFFGWT), serve as a signal peptide directing secretion. Residues 75–95 (IGTLISAGVGTVLTLIVAFGA) traverse the membrane as a helical segment.

The protein resides in the cell membrane. Its function is as follows. May be involved in metal transport. This Haloquadratum walsbyi (strain DSM 16790 / HBSQ001) protein is Putative metal transport protein HQ_3622A.